A 419-amino-acid polypeptide reads, in one-letter code: L-rhamnose isomerase (419 aa).

Mn(2+) contacts are provided by His-262, Asp-294, and Asp-296.

It belongs to the rhamnose isomerase family. In terms of assembly, homotetramer. The cofactor is Mn(2+).

The protein resides in the cytoplasm. The catalysed reaction is L-rhamnopyranose = L-rhamnulose. Its pathway is carbohydrate degradation; L-rhamnose degradation; glycerone phosphate from L-rhamnose: step 1/3. Functionally, catalyzes the interconversion of L-rhamnose and L-rhamnulose. The sequence is that of L-rhamnose isomerase from Escherichia coli O157:H7.